The following is a 446-amino-acid chain: Nuclear distribution protein nudF (446 aa).

In terms of domain architecture, LisH spans 9-41 (QAEELHKSMVAYLSSIKASQSSNTLREELGIGD). The stretch at 60-86 (TGIARLQRKILDLESKITSLQAELDSV) forms a coiled coil. 8 WD repeats span residues 113 to 154 (SHRD…RTLK), 156 to 196 (HMRG…ANIR), 200 to 240 (GHDH…CVRT), 243 to 282 (SNSI…PRAA), 285 to 345 (GHDN…IKTL), 347 to 386 (GHDN…RLVK), 391 to 430 (AHGH…PAFQ), and 432 to 446 (VIAT…RVFK).

The protein belongs to the WD repeat LIS1/nudF family. Self-associates. Interacts with nudE and dynein.

The protein resides in the cytoplasm. Its subcellular location is the cytoskeleton. It is found in the spindle pole. Positively regulates the activity of the minus-end directed microtubule motor protein dynein. May enhance dynein-mediated microtubule sliding by targeting dynein to the microtubule plus end. Required for nuclear migration during vegetative growth as well as development. Required for retrograde early endosome (EE) transport from the hyphal tip. Required for localization of dynein to the mitotic spindle poles. Recruits additional proteins to the dynein complex at SPBs. This Aspergillus terreus (strain NIH 2624 / FGSC A1156) protein is Nuclear distribution protein nudF.